The primary structure comprises 360 residues: Heme A synthase (360 aa).

9 helical membrane passes run 29 to 49, 111 to 131, 139 to 159, 175 to 195, 210 to 230, 242 to 262, 269 to 289, 309 to 329, and 330 to 350; these read WLFA…ATRL, FLGR…WWTG, LGLL…WIMV, LAAH…LAAG, LTAL…GLVA, PLMD…TPWI, VALV…VAAL, AILG…LLAV, and PLWA…MAAV. Position 276 (His-276) interacts with heme. Residue His-337 participates in heme binding.

This sequence belongs to the COX15/CtaA family. Type 2 subfamily. Interacts with CtaB. Heme b is required as a cofactor.

It localises to the cell membrane. The catalysed reaction is Fe(II)-heme o + 2 A + H2O = Fe(II)-heme a + 2 AH2. The protein operates within porphyrin-containing compound metabolism; heme A biosynthesis; heme A from heme O: step 1/1. Catalyzes the conversion of heme O to heme A by two successive hydroxylations of the methyl group at C8. The first hydroxylation forms heme I, the second hydroxylation results in an unstable dihydroxymethyl group, which spontaneously dehydrates, resulting in the formyl group of heme A. This is Heme A synthase from Methylobacterium nodulans (strain LMG 21967 / CNCM I-2342 / ORS 2060).